Consider the following 320-residue polypeptide: Pyrroline-5-carboxylate reductase (320 aa).

The protein belongs to the pyrroline-5-carboxylate reductase family.

The enzyme catalyses L-proline + NADP(+) = (S)-1-pyrroline-5-carboxylate + NADPH + 2 H(+). It catalyses the reaction L-proline + NAD(+) = (S)-1-pyrroline-5-carboxylate + NADH + 2 H(+). The protein operates within amino-acid biosynthesis; L-proline biosynthesis; L-proline from L-glutamate 5-semialdehyde: step 1/1. The protein is Pyrroline-5-carboxylate reductase (P5CR) of Lophium arboricola (Zalerion arboricola).